Consider the following 1705-residue polypeptide: Rho guanine nucleotide exchange factor 28 (1705 aa).

Disordered stretches follow at residues 287 to 316 (RPEERTAMPSSGAETEEEIKNSVSSRSAAE) and 473 to 524 (KKRS…ETNT). Phosphoserine occurs at positions 313 and 478. Polar residues predominate over residues 501–510 (PGSQSSSRTG). A Phosphoserine modification is found at S624. Positions 630-649 (MTSPRNKSKTKSKDAKDKEK) are disordered. Residues 640–649 (KSKDAKDKEK) are compositionally biased toward basic and acidic residues. The segment at 652–699 (RHQFAPGTFSGVLQCLVCDKTLLGKESLQCSNCNANVHKGCKDAAPAC) adopts a Phorbol-ester/DAG-type zinc-finger fold. Polar residues-rich tracts occupy residues 710-721 (NKPQTILGNSSF) and 759-775 (VPGTTLESFRRSATSLE). The disordered stretch occupies residues 710–800 (NKPQTILGNS…ELLQSMGSSP (91 aa)). A compositionally biased stretch (basic and acidic residues) spans 777–791 (ESDHNSCRSRSHSDE). Residues 849-1044 (KRQDVIFELM…KDMIATVDLK (196 aa)) enclose the DH domain. One can recognise a PH domain in the interval 1086 to 1188 (TLLYDGLVYW…WMRRIQQAVE (103 aa)). The interval 1187–1207 (VESCPEEKGGRTSESDEDKRK) is disordered. Over residues 1191–1207 (PEEKGGRTSESDEDKRK) the composition is skewed to basic and acidic residues. The interval 1295-1304 (AVSQSCEDSC) is interaction with PTK2/FAK1; required for regulation of axonal branching and synapse formation. Residues 1312-1339 (TLSSHDVPGSPTASLVTGGREGRGCSDV) are disordered. Positions 1372–1383 (IIQAIQNLTRLL) are mediates cytoplasmic retention and interaction with YWHAH. Residues 1425–1705 (QKSRDADRQH…DGAKENIVYL (281 aa)) are interaction with microtubules. Positions 1488 to 1525 (RSRGELDLQLQEYQHSLERLREGQRLVEREQARMRAQQ) form a coiled coil. Residues 1496 to 1527 (QLQEYQHSLERLREGQRLVEREQARMRAQQSL) are RNA-binding. S1538 bears the Phosphoserine mark. The segment at 1566–1579 (FINEALVQMSFNTF) is mediates cytoplasmic retention and interaction with MAPK8IP1. The segment at 1638–1705 (PFHESSKDSC…DGAKENIVYL (68 aa)) is disordered. A compositionally biased stretch (basic and acidic residues) spans 1641–1655 (ESSKDSCKNDLDTSH). Polar residues predominate over residues 1656 to 1669 (TESPTPHDSNSHRP). A compositionally biased stretch (basic and acidic residues) spans 1688 to 1699 (TRQDGETGDGAK).

Homooligomer; forms cytoplasmic aggregates. Forms a complex with MAPK8 and MAPK8IP1. Interacts with RHOA. Interacts with microtubules. Interacts with YWHAE and YWHAH. Interacts with PTK2/FAK1. Interacts with NEFL. Interacts with CTNND2; prevents interaction with RHOA. In terms of processing, phosphorylated on tyrosine upon stimulation of cells by laminin.

The protein localises to the cytoplasm. Its subcellular location is the cell membrane. Its function is as follows. Functions as a RHOA-specific guanine nucleotide exchange factor regulating signaling pathways downstream of integrins and growth factor receptors. Functions in axonal branching, synapse formation and dendritic morphogenesis. Also functions in focal adhesion formation, cell motility and B-lymphocytes activation. May regulate NEFL expression and aggregation and play a role in apoptosis. The polypeptide is Rho guanine nucleotide exchange factor 28 (ARHGEF28) (Homo sapiens (Human)).